The chain runs to 136 residues: Cancer/testis antigen 62 (136 aa).

A disordered region spans residues 1–22; the sequence is MMHTTSYRRLSPPHLTDQPSAY.

In terms of tissue distribution, testis specific. Expressed in cancer cell lines.

In Homo sapiens (Human), this protein is Cancer/testis antigen 62 (CT62).